A 59-amino-acid polypeptide reads, in one-letter code: Large ribosomal subunit protein bL33 (59 aa).

The protein belongs to the bacterial ribosomal protein bL33 family.

The chain is Large ribosomal subunit protein bL33 from Borrelia recurrentis (strain A1).